The primary structure comprises 2221 residues: RNA-directed RNA polymerase L (2221 aa).

Residues 29–292 are endonuclease; it reads KTVLLSQVNF…SERETLIEAE (264 aa). Mn(2+)-binding residues include Glu-54, Asp-91, and Glu-104. Lys-117 is a catalytic residue. Residues 1171 to 1369 form the RdRp catalytic domain; it reads LDMKSVVRLS…YLSSKLNKFI (199 aa). Position 1327 (Asp-1327) interacts with Mg(2+).

It belongs to the Bunyavirales RNA polymerase family. In terms of assembly, homomultimer; the oligomeric structure is essential for the polymerase activity. Interacts with nucleoprotein N. Interacts with protein Z; this interaction inhibits viral transcription and replication, Z partially blocks the product exit tunnel for the releasing nascent RNA product. Mn(2+) is required as a cofactor. The cofactor is Mg(2+).

The protein localises to the virion. Its subcellular location is the host cytoplasm. The catalysed reaction is RNA(n) + a ribonucleoside 5'-triphosphate = RNA(n+1) + diphosphate. Functionally, RNA-dependent RNA polymerase, which is responsible for the replication and transcription of the viral RNA genome using antigenomic RNA as an intermediate. During transcription, synthesizes subgenomic RNAs and assures their capping by a cap-snatching mechanism, which involves the endonuclease activity cleaving the host capped pre-mRNAs. These short capped RNAs are then used as primers for viral transcription. The 3'-end of subgenomic mRNAs molecules are heterogeneous and not polyadenylated. The replicase function is to direct synthesis of antigenomic and genomic RNA which are encapsidated and non capped. As a consequence of the use of the same enzyme for both transcription and replication, these mechanisms need to be well coordinated. These processes may be regulated by proteins N and Z in a dose-dependent manner. Z protein inhibits the viral polymerase L und thus the viral transcription and RNA synthesis. In Sigmodon hispidus (Hispid cotton rat), this protein is RNA-directed RNA polymerase L.